A 631-amino-acid polypeptide reads, in one-letter code: tRNA uridine 5-carboxymethylaminomethyl modification enzyme MnmG (631 aa).

Position 15–20 (15–20) interacts with FAD; sequence GAGHAG. The tract at residues 203 to 232 is disordered; sequence TPPRVDGNTVDYSKTQEEPGDKEPRHFSYT. Over residues 216–232 the composition is skewed to basic and acidic residues; that stretch reads KTQEEPGDKEPRHFSYT. 276–290 provides a ligand contact to NAD(+); it reads GPRYCPSIEDKVVRF.

This sequence belongs to the MnmG family. As to quaternary structure, homodimer. Heterotetramer of two MnmE and two MnmG subunits. FAD serves as cofactor.

The protein resides in the cytoplasm. NAD-binding protein involved in the addition of a carboxymethylaminomethyl (cmnm) group at the wobble position (U34) of certain tRNAs, forming tRNA-cmnm(5)s(2)U34. This Lactobacillus gasseri (strain ATCC 33323 / DSM 20243 / BCRC 14619 / CIP 102991 / JCM 1131 / KCTC 3163 / NCIMB 11718 / NCTC 13722 / AM63) protein is tRNA uridine 5-carboxymethylaminomethyl modification enzyme MnmG.